A 612-amino-acid polypeptide reads, in one-letter code: Alpha-glycerophosphate oxidase (612 aa).

21–49 (DLLIIGGGITGAGVALQAAASGLDTGLIE) lines the FAD pocket. The span at 399 to 408 (ETSTSEKELD) shows a compositional bias: basic and acidic residues. Residues 399 to 418 (ETSTSEKELDPSAVSRGSSF) are disordered.

The protein belongs to the FAD-dependent glycerol-3-phosphate dehydrogenase family. FAD serves as cofactor.

It localises to the cytoplasm. The catalysed reaction is sn-glycerol 3-phosphate + O2 = dihydroxyacetone phosphate + H2O2. In Streptococcus pyogenes serotype M6 (strain ATCC BAA-946 / MGAS10394), this protein is Alpha-glycerophosphate oxidase (glpO).